A 257-amino-acid chain; its full sequence is Large ribosomal subunit protein uL2 (257 aa).

Glycyl lysine isopeptide (Lys-Gly) (interchain with G-Cter in SUMO2) cross-links involve residues K42 and K149. The tract at residues 207–232 is disordered; the sequence is VEHPFGGGNHQHIGKPSTIRRDAPAG. H216 carries the post-translational modification (3S)-3-hydroxyhistidine. Residues K234 and K250 each participate in a glycyl lysine isopeptide (Lys-Gly) (interchain with G-Cter in SUMO2) cross-link.

The protein belongs to the universal ribosomal protein uL2 family. Component of the large ribosomal subunit. Interacts with CRY1. In terms of processing, hydroxylated on His-216 by RIOX1. The modification is impaired by hypoxia.

It localises to the cytoplasm. Component of the large ribosomal subunit. The ribosome is a large ribonucleoprotein complex responsible for the synthesis of proteins in the cell. This Bos taurus (Bovine) protein is Large ribosomal subunit protein uL2 (RPL8).